We begin with the raw amino-acid sequence, 513 residues long: Zinc finger CCCH-type with G patch domain-containing protein (513 aa).

Residue Met1 is modified to N-acetylmethionine. The segment at 92–131 (PVAPGAELETVPSRETGPGPTEPGQEEDDGEDEEGGAALS) is disordered. A compositionally biased stretch (acidic residues) spans 115–126 (GQEEDDGEDEEG). The segment at 176–202 (KSLKPCPFFLEGKCRFQENCRFSHGQV) adopts a C3H1-type zinc-finger fold. The segment at 267–298 (LPPLRTDPAGSSDSDGSDADDPSYARVVEPGA) is disordered. Residues Ser278 and Ser355 each carry the phosphoserine modification. The region spanning 315–361 (TRGIGSRLLAKMGYEFGKGLGRRADGRVEPVHAVVLPRGKSLDQCAE) is the G-patch domain. Disordered regions lie at residues 367–394 (TRAG…PPPR) and 493–513 (QEAG…MTEF). Positions 497–513 (LQREQRKADTHKKMTEF) are enriched in basic and acidic residues.

In terms of assembly, interacts with CHD4/Mi-2; the interaction is direct.

The protein localises to the nucleus. In terms of biological role, transcription repressor that specifically binds the 5'-GGAG[GA]A[GA]A-3' consensus sequence. Represses transcription by recruiting the chromatin multiprotein complex NuRD to target promoters. Negatively regulates expression of EGFR, a gene involved in cell proliferation, survival and migration. Its ability to repress genes of the EGFR pathway suggest it may act as a tumor suppressor. The protein is Zinc finger CCCH-type with G patch domain-containing protein (ZGPAT) of Ovis aries (Sheep).